Consider the following 131-residue polypeptide: C-type natriuretic peptide 1 (131 aa).

The N-terminal stretch at 1–22 (MLYPALLCAALLLIAPLGHTEG) is a signal peptide. Positions 23–109 (RTLHPSPDAI…KRAVMDRSRR (87 aa)) are excised as a propeptide. C115 and C131 are joined by a disulfide.

This sequence belongs to the natriuretic peptide family. Expressed in brain and to a low extent in atrium.

Its subcellular location is the secreted. Exhibits natriuretic and vasodepressant activity. Has a cGMP-stimulating activity. This is C-type natriuretic peptide 1 from Oncorhynchus mykiss (Rainbow trout).